A 352-amino-acid chain; its full sequence is RAD51-associated protein 1 (352 aa).

A compositionally biased stretch (basic residues) spans 1-10; it reads MVRPVRHKKP. Disordered stretches follow at residues 1–78 and 115–144; these read MVRP…TFSI and TNVQNSQDKSIEKHGSSKIETMNKSPHISN. Ser-19 and Ser-21 each carry phosphoserine. Positions 30–49 are interaction with DNA; that stretch reads VPLNKKSRTAPKELKQDKPK. The segment covering 39-72 has biased composition (basic and acidic residues); that stretch reads APKELKQDKPKPNLNNLRKEEIPVQEKTPKKRLP. Residue Thr-66 is modified to Phosphothreonine. Residues Ser-120 and Ser-124 each carry the phosphoserine modification. Residues 132–144 show a composition bias toward polar residues; it reads KIETMNKSPHISN. The SIM motif motif lies at 154–159; the sequence is LDKITV. Positions 162–323 are disordered; that stretch reads DVGGVQGKRK…RSSSSPLVVV (162 aa). Residues 188–221 show a composition bias toward acidic residues; sequence SDGDSANDTEPDFAPGEDSEDDSDFCESEDNDED. Positions 229–247 are enriched in basic and acidic residues; that stretch reads VKEIKKKEVKVKSPVEKKE. Residues 243 to 304 form an interaction with DNA region; the sequence is VEKKEKKSKS…PSAESKKPKW (62 aa). Lys-251 participates in a covalent cross-link: Glycyl lysine isopeptide (Lys-Gly) (interchain with G-Cter in ubiquitin; alternate). Lys-269 is covalently cross-linked (Glycyl lysine isopeptide (Lys-Gly) (interchain with G-Cter in SUMO)). Over residues 270-284 the composition is skewed to polar residues; that stretch reads SESQSLPKKVSLSSD. Ser-280 carries the phosphoserine modification. Positions 304–307 match the WVPP motif motif; the sequence is WVPP. Over residues 306–323 the composition is skewed to low complexity; it reads PPAASGGSRSSSSPLVVV. The tract at residues 313–352 is interaction with RAD51; the sequence is SRSSSSPLVVVSVKSPNQSLRLGLSRLARVKPLHPNATST. The residue at position 327 (Ser-327) is a Phosphoserine.

In terms of assembly, monomer; elongated monodisperse monomer. Interacts (via C-terminal region) with RAD51; the interaction is direct. Interacts (via SIM motif) with WDR48/UAF1; WDR48/UAF1 and RAD51AP1 cooperate together to stimulate RAD51-mediated homologous recombination (HR). Interacts (via WVPP motif) with DMC1; the interaction is direct. Interacts with PALB2. Interacts with RAD52. As to quaternary structure, does not interact with DMC1; lack of interaction is caused by the absence of the WVPP motif in this isoform. Post-translationally, sumoylation with SUMO2/3 by NSMCE2/MMS21 promotes stabilization, possibly by preventing ubiquitination. Sumoylation is required for alternative lengthening of telomeres (ALT) pathway. As to expression, highly expressed in testis and thymus. Lower levels in colon and small intestine. Little or no expression in spleen, prostate, ovary and peripheral blood leukocytes.

It localises to the chromosome. The protein localises to the nucleus. Its subcellular location is the telomere. Structure-specific DNA-binding protein involved in DNA repair by promoting RAD51-mediated homologous recombination. Acts by stimulating D-Loop formation by RAD51: specifically enhances joint molecule formation through its structure-specific DNA interaction and its interaction with RAD51. Binds single-stranded DNA (ssDNA), double-stranded DNA (dsDNA) and secondary DNA structures, such as D-loop structures: has a strong preference for branched-DNA structures that are obligatory intermediates during joint molecule formation. Cooperates with WDR48/UAF1 to stimulate RAD51-mediated homologous recombination: both WDR48/UAF1 and RAD51AP1 have coordinated role in DNA-binding during homologous recombination and DNA repair. WDR48/UAF1 and RAD51AP1 also have a coordinated role in DNA-binding to promote USP1-mediated deubiquitination of FANCD2. Also involved in meiosis by promoting DMC1-mediated homologous meiotic recombination. Key mediator of alternative lengthening of telomeres (ALT) pathway, a homology-directed repair mechanism of telomere elongation that controls proliferation in aggressive cancers, by stimulating homologous recombination. May also bind RNA; additional evidences are however required to confirm RNA-binding in vivo. This is RAD51-associated protein 1 from Homo sapiens (Human).